Consider the following 156-residue polypeptide: Oleosin Zm-I (156 aa).

The tract at residues 1 to 30 (MADHHRGATGGGGGYGDLQRGGGMHGEAQQ) is disordered. N-acetylalanine is present on Ala-2. Positions 2–42 (ADHHRGATGGGGGYGDLQRGGGMHGEAQQQQKQGAMMTALK) are polar. Positions 8 to 25 (ATGGGGGYGDLQRGGGMH) are enriched in gly residues. A hydrophobic region spans residues 43 to 114 (AATAATFGGS…AALSVFSWMY (72 aa)). 2 helical membrane passes run 51 to 71 (GSML…LTVA) and 95 to 115 (GFVT…WMYK).

This sequence belongs to the oleosin family. In terms of processing, the N-terminus is blocked.

It localises to the lipid droplet. It is found in the membrane. In terms of biological role, may have a structural role to stabilize the lipid body during desiccation of the seed by preventing coalescence of the oil. Probably interacts with both lipid and phospholipid moieties of lipid bodies. May also provide recognition signals for specific lipase anchorage in lipolysis during seedling growth. The sequence is that of Oleosin Zm-I (OLE16) from Zea mays (Maize).